Reading from the N-terminus, the 864-residue chain is Probable beta-glucosidase J (864 aa).

Asp-233 is an active-site residue. One can recognise a PA14 domain in the interval 411–578; that stretch reads TGEPGYTFRV…DTDAAIQQAV (168 aa). Residues Asn-434, Asn-447, and Asn-503 are each glycosylated (N-linked (GlcNAc...) asparagine).

Belongs to the glycosyl hydrolase 3 family.

It localises to the secreted. The catalysed reaction is Hydrolysis of terminal, non-reducing beta-D-glucosyl residues with release of beta-D-glucose.. The protein operates within glycan metabolism; cellulose degradation. Beta-glucosidases are one of a number of cellulolytic enzymes involved in the degradation of cellulosic biomass. Catalyzes the last step releasing glucose from the inhibitory cellobiose. This is Probable beta-glucosidase J (bglJ) from Neosartorya fischeri (strain ATCC 1020 / DSM 3700 / CBS 544.65 / FGSC A1164 / JCM 1740 / NRRL 181 / WB 181) (Aspergillus fischerianus).